Consider the following 28-residue polypeptide: Aspartate aminotransferase, mitochondrial (28 aa).

The protein belongs to the class-I pyridoxal-phosphate-dependent aminotransferase family. Homodimer. It depends on pyridoxal 5'-phosphate as a cofactor.

Its subcellular location is the mitochondrion matrix. The catalysed reaction is L-aspartate + 2-oxoglutarate = oxaloacetate + L-glutamate. Its function is as follows. Plays a key role in amino acid metabolism. Important for metabolite exchange between mitochondria and cytosol. This chain is Aspartate aminotransferase, mitochondrial, found in Catharanthus roseus (Madagascar periwinkle).